The sequence spans 166 residues: CDP-archaeol synthase (166 aa).

5 helical membrane-spanning segments follow: residues 7–27, 55–75, 78–98, 116–136, and 138–158; these read LLLS…GPFI, LIVA…FFTA, TLIS…GAFI, LDFV…ITWY, and FLFI…VAYL.

It belongs to the CDP-archaeol synthase family. Mg(2+) is required as a cofactor.

The protein resides in the cell membrane. The catalysed reaction is 2,3-bis-O-(geranylgeranyl)-sn-glycerol 1-phosphate + CTP + H(+) = CDP-2,3-bis-O-(geranylgeranyl)-sn-glycerol + diphosphate. It functions in the pathway membrane lipid metabolism; glycerophospholipid metabolism. Its function is as follows. Catalyzes the formation of CDP-2,3-bis-(O-geranylgeranyl)-sn-glycerol (CDP-archaeol) from 2,3-bis-(O-geranylgeranyl)-sn-glycerol 1-phosphate (DGGGP) and CTP. This reaction is the third ether-bond-formation step in the biosynthesis of archaeal membrane lipids. In Saccharolobus islandicus (strain L.S.2.15 / Lassen #1) (Sulfolobus islandicus), this protein is CDP-archaeol synthase.